We begin with the raw amino-acid sequence, 359 residues long: Fructose-bisphosphate aldolase (359 aa).

Ser62 lines the D-glyceraldehyde 3-phosphate pocket. The Proton donor role is filled by Asp109. Residues His110, Asp144, Glu174, and His226 each coordinate Zn(2+). Residue Gly227 coordinates dihydroxyacetone phosphate. His265 is a binding site for Zn(2+). Dihydroxyacetone phosphate contacts are provided by residues 266-268 and 287-290; these read GGS and NLDT.

It belongs to the class II fructose-bisphosphate aldolase family. As to quaternary structure, homodimer. It depends on Zn(2+) as a cofactor.

It is found in the cytoplasm. The enzyme catalyses beta-D-fructose 1,6-bisphosphate = D-glyceraldehyde 3-phosphate + dihydroxyacetone phosphate. Its pathway is carbohydrate degradation; glycolysis; D-glyceraldehyde 3-phosphate and glycerone phosphate from D-glucose: step 4/4. Functionally, catalyzes the aldol condensation of dihydroxyacetone phosphate (DHAP or glycerone-phosphate) with glyceraldehyde 3-phosphate (G3P) to form fructose 1,6-bisphosphate (FBP) in gluconeogenesis and the reverse reaction in glycolysis. This is Fructose-bisphosphate aldolase (FBA1) from Candida albicans (strain SC5314 / ATCC MYA-2876) (Yeast).